Here is a 444-residue protein sequence, read N- to C-terminus: N-succinylarginine dihydrolase (444 aa).

Residues 19–28 (AGLSFGNVAS), asparagine 110, and 137–138 (HR) each bind substrate. The active site involves glutamate 174. Residue arginine 214 coordinates substrate. Residue histidine 250 is part of the active site. Aspartate 252 and asparagine 362 together coordinate substrate. Cysteine 368 functions as the Nucleophile in the catalytic mechanism.

Belongs to the succinylarginine dihydrolase family. Homodimer.

It catalyses the reaction N(2)-succinyl-L-arginine + 2 H2O + 2 H(+) = N(2)-succinyl-L-ornithine + 2 NH4(+) + CO2. It functions in the pathway amino-acid degradation; L-arginine degradation via AST pathway; L-glutamate and succinate from L-arginine: step 2/5. In terms of biological role, catalyzes the hydrolysis of N(2)-succinylarginine into N(2)-succinylornithine, ammonia and CO(2). The protein is N-succinylarginine dihydrolase of Shewanella baltica (strain OS223).